The sequence spans 341 residues: Phosphoribosylformylglycinamidine cyclo-ligase (341 aa).

This sequence belongs to the AIR synthase family.

Its subcellular location is the cytoplasm. It carries out the reaction 2-formamido-N(1)-(5-O-phospho-beta-D-ribosyl)acetamidine + ATP = 5-amino-1-(5-phospho-beta-D-ribosyl)imidazole + ADP + phosphate + H(+). Its pathway is purine metabolism; IMP biosynthesis via de novo pathway; 5-amino-1-(5-phospho-D-ribosyl)imidazole from N(2)-formyl-N(1)-(5-phospho-D-ribosyl)glycinamide: step 2/2. This chain is Phosphoribosylformylglycinamidine cyclo-ligase, found in Xanthomonas campestris pv. campestris (strain 8004).